Consider the following 373-residue polypeptide: Caspase-4 (373 aa).

Residues 1 to 59 (MAENKHPDKPLKVLEQLGKEVLTEYLEKLVQSNVLKLKEEDKQKFNNAERSDKRWVFVD) form a required for LPS-binding region. A propeptide spanning residues 1 to 80 (MAENKHPDKP…MLLQTFFSVD (80 aa)) is cleaved from the precursor. A CARD domain is found at 1–91 (MAENKHPDKP…GSHHGEANLE (91 aa)). Ser83 bears the Phosphoserine mark. Residues His206 and Cys254 contribute to the active site. Positions 267–285 (SSKPQLCRGVDLPRNMEAD) are excised as a propeptide. Arg310 carries the post-translational modification (Microbial infection) ADP-riboxanated arginine.

Belongs to the peptidase C14A family. As to quaternary structure, heterotetramer that consists of two anti-parallel arranged heterodimers, each one formed by a 20 kDa (Caspase-4 subunit p20) and a 10 kDa (Caspase-4 subunit p10) subunit. Upon direct LPS-binding, forms large homooligomers, resulting in its activation. These oligomers are often referred to as 'non-canonical inflammasomes'. In its precursor form, interacts with TMEM214; this interaction is required for association with the endoplasmic reticulum membrane. Interacts with CASP1. Interacts with NOD2. Interacts with Serpinb1a, Serpinb1b and Serpinb1c; these interactions regulate CASP4 activity. Heterotetramer that consists of two anti-parallel arranged heterodimers, each one formed by a 20 kDa (Caspase-4 subunit p20) and a 10 kDa (Caspase-4 subunit p10) subunit. In terms of processing, in response to activation signals, undergoes autoproteolytic cleavage and activation. (Microbial infection) ADP-riboxanation by S.flexneri OspC3 blocks CASP4 autoprocessing, preventing CASP4 activation and ability to recognize and cleave GSDMD, thereby thwarting the inflammasome/pyroptosis-mediated defense. In terms of tissue distribution, widely expressed, including in thymus, lung and spleen (at protein level). Very low levels, if any, in the brain.

It localises to the cytoplasm. Its subcellular location is the cytosol. The protein resides in the endoplasmic reticulum membrane. The protein localises to the mitochondrion. It is found in the inflammasome. It localises to the secreted. It carries out the reaction Strict requirement for Asp at the P1 position and has a preferred cleavage sequence of (Ile/Leu/Val/Phe)-Gly-His-Asp-|-.. With respect to regulation, activated by homooligomerization induced by direct binding to cytosolic LPS, in a TLR4-independent manner. In addition to LPS, CASP4/CASP11 may also be activated by oxidized phospholipid 1-palmitoyl-2-arachidonoyl- sn-glycero-3-phosphorylcholine, an oxidized phospholipid (oxPAPC), in dendritic cells, promoting adaptive immunity. The role of oxPAPC is however unclear and another report suggests that oxPAPC competes with LPS-binding and inhibits the non-canonical inflammasome in macrophages. Functionally, inflammatory caspase that acts as the effector of the non-canonical inflammasome by mediating lipopolysaccharide (LPS)-induced pyroptosis. Also indirectly activates the NLRP3 and NLRP6 inflammasomes. Acts as a thiol protease that cleaves a tetrapeptide after an Asp residue at position P1: catalyzes cleavage of CGAS and GSDMD. In contrast to its human ortholog, does not cleave IL18. Effector of the non-canonical inflammasome independently of NLRP3 inflammasome and CASP1: the non-canonical inflammasome promotes pyroptosis through GSDMD cleavage without involving secretion of cytokine IL1B and IL18. In the non-canonical inflammasome, CASP4/CASP11 is activated by direct binding to the lipid A moiety of LPS without the need of an upstream sensor. LPS-binding promotes CASP4/CASP11 activation and CASP4/CASP11-mediated cleavage of GSDMD, followed by pyroptosis of infected cells and their extrusion into the gut lumen. Also indirectly promotes secretion of mature cytokines (IL1A, IL18 and HMGB1) downstream of GSDMD-mediated pyroptosis via activation of the NLRP3 and NLRP6 inflammasomes. Involved in NLRP3-dependent CASP1 activation and IL1B and IL18 secretion in response to non-canonical activators, such as UVB radiation or cholera enterotoxin. Involved in NLRP6 inflammasome-dependent activation in response to lipoteichoic acid (LTA), a cell-wall component of Gram-positive bacteria, which leads to CASP1 activation and IL1B and IL18 secretion. Involved in LPS-induced IL6 secretion; this activity may not require caspase enzymatic activity. The non-canonical inflammasome is required for innate immunity to cytosolic, but not vacuolar, bacteria. Plays a crucial role in the restriction of S.typhimurium replication in colonic epithelial cells during infection. Activation of the non-canonical inflammasome in brain endothelial cells can lead to excessive pyroptosis, leading to blood-brain barrier breakdown. Pyroptosis limits bacterial replication, while cytokine secretion promotes the recruitment and activation of immune cells and triggers mucosal inflammation. May also act as an activator of adaptive immunity in dendritic cells, following activation by oxidized phospholipid 1-palmitoyl-2-arachidonoyl- sn-glycero-3-phosphorylcholine, an oxidized phospholipid (oxPAPC). Cleavage of GSDMD is not strictly dependent on the consensus cleavage site but depends on an exosite interface on CASP4/CASP11 that recognizes and binds the Gasdermin-D, C-terminal (GSDMD-CT) part. In contrast, it does not directly process IL1B. During non-canonical inflammasome activation, cuts CGAS and may play a role in the regulation of antiviral innate immune activation. This chain is Caspase-4, found in Mus musculus (Mouse).